Here is a 258-residue protein sequence, read N- to C-terminus: Phosphoribosylaminoimidazole-succinocarboxamide synthase (258 aa).

This sequence belongs to the SAICAR synthetase family.

It carries out the reaction 5-amino-1-(5-phospho-D-ribosyl)imidazole-4-carboxylate + L-aspartate + ATP = (2S)-2-[5-amino-1-(5-phospho-beta-D-ribosyl)imidazole-4-carboxamido]succinate + ADP + phosphate + 2 H(+). It functions in the pathway purine metabolism; IMP biosynthesis via de novo pathway; 5-amino-1-(5-phospho-D-ribosyl)imidazole-4-carboxamide from 5-amino-1-(5-phospho-D-ribosyl)imidazole-4-carboxylate: step 1/2. In Sphingopyxis alaskensis (strain DSM 13593 / LMG 18877 / RB2256) (Sphingomonas alaskensis), this protein is Phosphoribosylaminoimidazole-succinocarboxamide synthase.